Reading from the N-terminus, the 219-residue chain is Ribose-5-phosphate isomerase A (219 aa).

Substrate-binding positions include 28 to 31 (TGST), 81 to 84 (DGAD), and 94 to 97 (KGGG). Glu-103 (proton acceptor) is an active-site residue. Lys-121 is a binding site for substrate.

It belongs to the ribose 5-phosphate isomerase family. In terms of assembly, homodimer.

It catalyses the reaction aldehydo-D-ribose 5-phosphate = D-ribulose 5-phosphate. Its pathway is carbohydrate degradation; pentose phosphate pathway; D-ribose 5-phosphate from D-ribulose 5-phosphate (non-oxidative stage): step 1/1. Its function is as follows. Catalyzes the reversible conversion of ribose-5-phosphate to ribulose 5-phosphate. The polypeptide is Ribose-5-phosphate isomerase A (Erwinia tasmaniensis (strain DSM 17950 / CFBP 7177 / CIP 109463 / NCPPB 4357 / Et1/99)).